The primary structure comprises 294 residues: Protoheme IX farnesyltransferase (294 aa).

The next 9 membrane-spanning stretches (helical) occupy residues 24–44 (VVLL…PGWV), 48–68 (LIAF…AINH), 96–116 (ALWF…LFVN), 118–138 (LTAL…TGYL), 146–166 (IVIG…AVTG), 172–192 (ALLL…ALAI), 224–244 (VLLL…WIYL), 245–265 (LGAL…YFTD), and 268–288 (VVAM…FVFL).

Belongs to the UbiA prenyltransferase family. Protoheme IX farnesyltransferase subfamily.

The protein resides in the cell inner membrane. The catalysed reaction is heme b + (2E,6E)-farnesyl diphosphate + H2O = Fe(II)-heme o + diphosphate. It participates in porphyrin-containing compound metabolism; heme O biosynthesis; heme O from protoheme: step 1/1. Its function is as follows. Converts heme B (protoheme IX) to heme O by substitution of the vinyl group on carbon 2 of heme B porphyrin ring with a hydroxyethyl farnesyl side group. This Legionella pneumophila (strain Paris) protein is Protoheme IX farnesyltransferase.